The sequence spans 376 residues: Methionine import ATP-binding protein MetN 2 (376 aa).

An ABC transporter domain is found at 34–273 (VRFINLGKTY…PQHDVSKTLL (240 aa)). 70 to 77 (GRSGAGKS) is an ATP binding site.

The protein belongs to the ABC transporter superfamily. Methionine importer (TC 3.A.1.24) family. As to quaternary structure, the complex is composed of two ATP-binding proteins (MetN), two transmembrane proteins (MetI) and a solute-binding protein (MetQ).

It is found in the cell inner membrane. It carries out the reaction L-methionine(out) + ATP + H2O = L-methionine(in) + ADP + phosphate + H(+). It catalyses the reaction D-methionine(out) + ATP + H2O = D-methionine(in) + ADP + phosphate + H(+). Its function is as follows. Part of the ABC transporter complex MetNIQ involved in methionine import. Responsible for energy coupling to the transport system. This is Methionine import ATP-binding protein MetN 2 from Pseudomonas savastanoi pv. phaseolicola (strain 1448A / Race 6) (Pseudomonas syringae pv. phaseolicola (strain 1448A / Race 6)).